Consider the following 156-residue polypeptide: Oxidized purine nucleoside triphosphate hydrolase (156 aa).

Residues T3 to K132 enclose the Nudix hydrolase domain. T8 contacts 2-oxo-dATP. K23 contributes to the 8-oxo-dGTP binding site. Residues N33 and F35–K38 contribute to the 2-oxo-dATP site. Residues G36, E52, E55, E56, and E100 each coordinate Mg(2+). A Nudix box motif is present at residues G37 to G58. Residue W117–D120 coordinates 2-oxo-dATP.

Belongs to the Nudix hydrolase family. In terms of assembly, monomer. Mg(2+) serves as cofactor.

The protein resides in the cytoplasm. Its subcellular location is the nucleus. The protein localises to the nucleus membrane. It localises to the cytoplasmic vesicle. It is found in the secretory vesicle. The protein resides in the acrosome. It catalyses the reaction 2-oxo-dATP + H2O = 2-oxo-dAMP + diphosphate + H(+). The enzyme catalyses 2-oxo-ATP + H2O = 2-oxo-AMP + diphosphate + H(+). It carries out the reaction 8-oxo-dGTP + H2O = 8-oxo-dGMP + diphosphate + H(+). The catalysed reaction is 8-oxo-dATP + H2O = 8-oxo-dAMP + diphosphate + H(+). It catalyses the reaction O(6)-methyl-dGTP + H2O = O(6)-methyl-dGMP + diphosphate + H(+). The enzyme catalyses N(6)-methyl-dATP + H2O = N(6)-methyl-dAMP + diphosphate + H(+). It carries out the reaction N(6)-methyl-ATP + H2O = N(6)-methyl-AMP + diphosphate + H(+). Oxidized purine nucleoside triphosphate hydrolase which is a prominent sanitizer of the oxidized nucleotide pool. Catalyzes the hydrolysis of 2-oxo-dATP (2-hydroxy-dATP) into 2-oxo-dAMP. Also has a significant hydrolase activity toward 2-oxo-ATP, 8-oxo-dGTP and 8-oxo-dATP. Through the hydrolysis of oxidized purine nucleoside triphosphates, prevents their incorporation into DNA and the subsequent transversions A:T to C:G and G:C to T:A. Also catalyzes the hydrolysis of methylated purine nucleoside triphosphate preventing their integration into DNA. Through this antimutagenic activity protects cells from oxidative stress. The protein is Oxidized purine nucleoside triphosphate hydrolase (NUDT1) of Canis lupus familiaris (Dog).